The sequence spans 652 residues: DNA ligase (652 aa).

Residues 29-33 (DQEYD), 78-79 (SL), and E107 contribute to the NAD(+) site. The N6-AMP-lysine intermediate role is filled by K109. NAD(+) is bound by residues R130, E164, K278, and K302. Zn(2+)-binding residues include C395, C398, C413, and C418. Positions 577–652 (DTSAQLFGLT…VKDENWLLQL (76 aa)) constitute a BRCT domain.

It belongs to the NAD-dependent DNA ligase family. LigA subfamily. Requires Mg(2+) as cofactor. Mn(2+) serves as cofactor.

It carries out the reaction NAD(+) + (deoxyribonucleotide)n-3'-hydroxyl + 5'-phospho-(deoxyribonucleotide)m = (deoxyribonucleotide)n+m + AMP + beta-nicotinamide D-nucleotide.. DNA ligase that catalyzes the formation of phosphodiester linkages between 5'-phosphoryl and 3'-hydroxyl groups in double-stranded DNA using NAD as a coenzyme and as the energy source for the reaction. It is essential for DNA replication and repair of damaged DNA. This Streptococcus uberis (strain ATCC BAA-854 / 0140J) protein is DNA ligase.